A 243-amino-acid chain; its full sequence is Pyridoxine 5'-phosphate synthase (243 aa).

Residue Asn-9 coordinates 3-amino-2-oxopropyl phosphate. 11 to 12 lines the 1-deoxy-D-xylulose 5-phosphate pocket; the sequence is DH. 3-amino-2-oxopropyl phosphate is bound at residue Arg-20. Residue His-45 is the Proton acceptor of the active site. 2 residues coordinate 1-deoxy-D-xylulose 5-phosphate: Arg-47 and His-52. The Proton acceptor role is filled by Glu-72. 1-deoxy-D-xylulose 5-phosphate is bound at residue Thr-102. The active-site Proton donor is His-193. 3-amino-2-oxopropyl phosphate-binding positions include Gly-194 and 215–216; that span reads GH.

The protein belongs to the PNP synthase family. As to quaternary structure, homooctamer; tetramer of dimers.

Its subcellular location is the cytoplasm. It carries out the reaction 3-amino-2-oxopropyl phosphate + 1-deoxy-D-xylulose 5-phosphate = pyridoxine 5'-phosphate + phosphate + 2 H2O + H(+). It participates in cofactor biosynthesis; pyridoxine 5'-phosphate biosynthesis; pyridoxine 5'-phosphate from D-erythrose 4-phosphate: step 5/5. Its function is as follows. Catalyzes the complicated ring closure reaction between the two acyclic compounds 1-deoxy-D-xylulose-5-phosphate (DXP) and 3-amino-2-oxopropyl phosphate (1-amino-acetone-3-phosphate or AAP) to form pyridoxine 5'-phosphate (PNP) and inorganic phosphate. This chain is Pyridoxine 5'-phosphate synthase, found in Salmonella paratyphi A (strain ATCC 9150 / SARB42).